We begin with the raw amino-acid sequence, 1088 residues long: Neural cell adhesion molecule 1-A (1088 aa).

The N-terminal stretch at 1–19 (MLHIKDLIWTLYFIGTAVA) is a signal peptide. Ig-like C2-type domains are found at residues 20-108 (LEVN…GTVN), 113-202 (QKLT…KDIQ), 209-294 (PTIQ…AEAT), 303-397 (PKIT…FEVQ), and 400-484 (PKIR…HEFS). Topologically, residues 20-705 (LEVNIVPDQG…TASAGTGLGT (686 aa)) are extracellular. 2 disulfides stabilise this stretch: cysteine 41–cysteine 93 and cysteine 136–cysteine 186. Asparagine 82 carries N-linked (GlcNAc...) asparagine glycosylation. Residues 149 to 153 (RHKGK) and 158 to 162 (KKDVR) each bind heparin. N-linked (GlcNAc...) asparagine glycosylation is present at asparagine 219. Cysteine 232 and cysteine 282 are joined by a disulfide. N-linked (GlcNAc...) asparagine glycosylation is found at asparagine 310, asparagine 341, asparagine 417, asparagine 443, and asparagine 472. Cysteine 323 and cysteine 379 are disulfide-bonded. A disulfide bond links cysteine 420 and cysteine 473. 2 consecutive Fibronectin type-III domains span residues 493-592 (TPSS…TQPV) and 594-690 (EPSA…TAKP). Residues 706-723 (GAIVGILIVIFVLLLVVV) form a helical membrane-spanning segment. Over 724–1088 (DVTCFFLNKC…TQTNANESKA (365 aa)) the chain is Cytoplasmic. Residues 758–784 (EGKAAFSKDESKEPIVEVRTEEERTPN) are compositionally biased toward basic and acidic residues. 3 disordered regions span residues 758–802 (EGKA…LTEP), 829–1000 (FATA…DGGT), and 1024–1088 (VASG…ESKA). Low complexity-rich tracts occupy residues 835 to 847 (SPTS…TSST), 854 to 875 (APDS…APTT), and 913 to 936 (PSAA…VPPN). The span at 965-974 (QPSTVKNPTE) shows a compositional bias: polar residues. A compositionally biased stretch (basic and acidic residues) spans 1046-1064 (AKTEKTQVEEKSKPEEIDV). Residues 1076–1088 (NEATQTNANESKA) are compositionally biased toward polar residues.

Polysialylated by ST8SIA2 and ST8SIA4. Polysialylation modulates cell interactions by confering both attractive and repulsive properties that are highly regulated by ST8SIA2 and ST8SIA4. Polysialylation is formed on a-2,3-linked sialic acid of core glycans. As to expression, expressed in neuron and in presumptive neural tissue.

Its subcellular location is the cell membrane. Functionally, this protein is a cell adhesion molecule involved in neuron-neuron adhesion, neurite fasciculation, outgrowth of neurites, etc. In Xenopus laevis (African clawed frog), this protein is Neural cell adhesion molecule 1-A.